The following is a 174-amino-acid chain: Adenine phosphoribosyltransferase (174 aa).

Belongs to the purine/pyrimidine phosphoribosyltransferase family. As to quaternary structure, homodimer.

Its subcellular location is the cytoplasm. The catalysed reaction is AMP + diphosphate = 5-phospho-alpha-D-ribose 1-diphosphate + adenine. The protein operates within purine metabolism; AMP biosynthesis via salvage pathway; AMP from adenine: step 1/1. In terms of biological role, catalyzes a salvage reaction resulting in the formation of AMP, that is energically less costly than de novo synthesis. In Photobacterium profundum (strain SS9), this protein is Adenine phosphoribosyltransferase.